The following is a 245-amino-acid chain: 2,3-bisphosphoglycerate-dependent phosphoglycerate mutase (245 aa).

Substrate-binding positions include 8–15 (RHGQSLWN), 21–22 (TG), Arg-60, 87–90 (ERHY), Lys-98, 114–115 (RR), and 183–184 (GN). His-9 serves as the catalytic Tele-phosphohistidine intermediate. Glu-87 functions as the Proton donor/acceptor in the catalytic mechanism.

This sequence belongs to the phosphoglycerate mutase family. BPG-dependent PGAM subfamily.

It carries out the reaction (2R)-2-phosphoglycerate = (2R)-3-phosphoglycerate. It functions in the pathway carbohydrate degradation; glycolysis; pyruvate from D-glyceraldehyde 3-phosphate: step 3/5. Catalyzes the interconversion of 2-phosphoglycerate and 3-phosphoglycerate. In Bacillus thuringiensis subsp. konkukian (strain 97-27), this protein is 2,3-bisphosphoglycerate-dependent phosphoglycerate mutase.